The primary structure comprises 319 residues: Putrescine hydroxycinnamoyltransferase 2 (319 aa).

Catalysis depends on proton acceptor residues His-160 and Asp-301.

The protein belongs to the plant acyltransferase family.

In terms of biological role, hydroxycinnamoyl transferase that catalyzes the transfer of an acyl from p-coumaryol-CoA to putrescine, to produce coumaroyl putrescine. The sequence is that of Putrescine hydroxycinnamoyltransferase 2 from Oryza sativa subsp. japonica (Rice).